The sequence spans 229 residues: Cytidylate kinase (229 aa).

Glycine 10–threonine 18 contacts ATP.

This sequence belongs to the cytidylate kinase family. Type 1 subfamily.

The protein localises to the cytoplasm. The catalysed reaction is CMP + ATP = CDP + ADP. The enzyme catalyses dCMP + ATP = dCDP + ADP. This is Cytidylate kinase from Bacteroides thetaiotaomicron (strain ATCC 29148 / DSM 2079 / JCM 5827 / CCUG 10774 / NCTC 10582 / VPI-5482 / E50).